The following is a 498-amino-acid chain: ATP synthase subunit beta, chloroplastic (498 aa).

ATP is bound at residue 172–179 (GGAGVGKT).

Belongs to the ATPase alpha/beta chains family. In terms of assembly, F-type ATPases have 2 components, CF(1) - the catalytic core - and CF(0) - the membrane proton channel. CF(1) has five subunits: alpha(3), beta(3), gamma(1), delta(1), epsilon(1). CF(0) has four main subunits: a(1), b(1), b'(1) and c(9-12).

It localises to the plastid. The protein localises to the chloroplast thylakoid membrane. The catalysed reaction is ATP + H2O + 4 H(+)(in) = ADP + phosphate + 5 H(+)(out). Functionally, produces ATP from ADP in the presence of a proton gradient across the membrane. The catalytic sites are hosted primarily by the beta subunits. The sequence is that of ATP synthase subunit beta, chloroplastic from Eucalyptus globulus subsp. globulus (Tasmanian blue gum).